The sequence spans 104 residues: Protamine-2 (104 aa).

Phosphoserine is present on residues serine 8 and serine 10. The interval 23-104 (WQEQGRNGQE…SRRRRRCRRY (82 aa)) is disordered. A compositionally biased stretch (low complexity) spans 24 to 35 (QEQGRNGQEEQG). A Phosphoserine modification is found at serine 37. Residues 54-104 (YRRRRCSRRRRYRIHRRRSRSCRRRRRRSCRYRRRPRRGCRSRRRRRCRRY) are compositionally biased toward basic residues.

It belongs to the protamine P2 family. Interacts with TDRP. In terms of processing, proteolytic processing into mature chains is required for histone eviction during spermatogenesis. Transition proteins (TNP1 and TNP2) are required for processing. As to expression, testis.

It is found in the nucleus. It localises to the chromosome. Protamines substitute for histones in the chromatin of sperm during the haploid phase of spermatogenesis. They compact sperm DNA into a highly condensed, stable and inactive complex. This chain is Protamine-2 (PRM2), found in Callithrix jacchus (White-tufted-ear marmoset).